Reading from the N-terminus, the 246-residue chain is MAAAPPAAVSEPTAARQKLLALLGQVQTYVFQLELLRRCDPQIGLGKLAQLKLNALQVRVLRRHLRPGLEAQAAAFLTPLSVTLELLLEYAWREGERLLGHLDTFATTGDVSAFFTETMGLARPCPYHQQIRLETYGGDVRMELCFLHDVENFLKQLNYCHLTTPPSGATAALERVREFMVAAVGSGLIVPPELSDPSHPCAVCFEELCVTANQGATIARRLADRICNHVTQQAQVRLDANELRRY.

Belongs to the herpesviridae PRTP family.

Its function is as follows. This protein may affect translocation of the virus glycoproteins to membranes. It is involved in capsid maturation. The protein is Processing and transport protein (UL28) of Homo sapiens (Human).